A 378-amino-acid polypeptide reads, in one-letter code: Plant intracellular Ras-group-related LRR protein 8 (378 aa).

The Ubiquitin-like domain maps to 10–86 (PTITVQVKFG…VMLMASQGLH (77 aa)). Residues 85–120 (LHQGDGPITKNSSVPAPSTRRASNVKEAQIQKSDTN) form a disordered region. Residues 93–106 (TKNSSVPAPSTRRA) are compositionally biased toward polar residues. LRR repeat units lie at residues 129–152 (WKAT…VWGC), 153–176 (GSSI…IAAL), 178–201 (SLQK…GLTC), 202–225 (VQTL…LGSI), 226–250 (THLR…LLKH), 252–271 (EILI…IGGC), 272–293 (ESLN…AFGN), 294–317 (LQHL…FFIK), and 319–344 (SQLI…GWEE).

The protein belongs to the SHOC2 family. Widely expressed except in panicles.

Leucine-rich repeat protein that likely mediates protein interactions, possibly in the context of signal transduction. In Oryza sativa subsp. japonica (Rice), this protein is Plant intracellular Ras-group-related LRR protein 8 (IRL8).